Reading from the N-terminus, the 360-residue chain is Nucleoporin SEH1 (360 aa).

WD repeat units lie at residues 10–49 (DHKD…DWHC), 55–96 (THSG…SNDK), 111–152 (DSRT…NLSQ), 160–210 (SCKL…RKYA), 217–258 (SVSD…KELS), and 276–315 (NHNS…NWKC).

It belongs to the WD repeat SEC13 family. In terms of assembly, component of the Nup107-160 subcomplex of the nuclear pore complex (NPC). The Nup107-160 subcomplex includes NUP160, NUP133, NUP107, NUP98, NUP85, NUP43, NUP37, SEH1 and SEC13. Component of the GATOR2 subcomplex, composed of MIOS, SEC13, SEH1L, WDR24 and WDR59. The GATOR2 complex interacts with CASTOR1 and CASTOR2; the interaction is negatively regulated by arginine. The GATOR2 complex interacts with SESN1, SESN2 and SESN3; the interaction is negatively regulated by amino acids.

The protein resides in the chromosome. It localises to the centromere. The protein localises to the kinetochore. It is found in the nucleus. Its subcellular location is the nuclear pore complex. The protein resides in the lysosome membrane. Its activity is regulated as follows. The GATOR2 complex is negatively regulated by the upstream amino acid sensors CASTOR1 and SESN2, which sequester the GATOR2 complex in absence of amino acids. In the presence of abundant amino acids, GATOR2 is released from CASTOR1 and SESN2 and activated. Its function is as follows. Component of the Nup107-160 subcomplex of the nuclear pore complex (NPC). The Nup107-160 subcomplex is required for the assembly of a functional NPC. The Nup107-160 subcomplex is also required for normal kinetochore microtubule attachment, mitotic progression and chromosome segregation. This subunit plays a role in recruitment of the Nup107-160 subcomplex to the kinetochore. As a component of the GATOR2 complex, functions as an activator of the amino acid-sensing branch of the mTORC1 signaling pathway. The GATOR2 complex indirectly activates mTORC1 through the inhibition of the GATOR1 subcomplex. GATOR2 probably acts as an E3 ubiquitin-protein ligase toward GATOR1. In the presence of abundant amino acids, the GATOR2 complex mediates ubiquitination of the NPRL2 core component of the GATOR1 complex, leading to GATOR1 inactivation. In the absence of amino acids, GATOR2 is inhibited, activating the GATOR1 complex. The sequence is that of Nucleoporin SEH1 (seh1l) from Xenopus tropicalis (Western clawed frog).